A 265-amino-acid chain; its full sequence is Phosphonoacetaldehyde hydrolase (265 aa).

Residue aspartate 10 is the Nucleophile of the active site. Mg(2+) contacts are provided by aspartate 10 and alanine 12. Catalysis depends on lysine 51, which acts as the Schiff-base intermediate with substrate. A Mg(2+)-binding site is contributed by aspartate 184.

Belongs to the HAD-like hydrolase superfamily. PhnX family. Homodimer. Mg(2+) is required as a cofactor.

The enzyme catalyses phosphonoacetaldehyde + H2O = acetaldehyde + phosphate + H(+). Involved in phosphonate degradation. This is Phosphonoacetaldehyde hydrolase from Latilactobacillus sakei subsp. sakei (strain 23K) (Lactobacillus sakei subsp. sakei).